The sequence spans 131 residues: Profilin-7 (131 aa).

C13 and C115 form a disulfide bridge. Positions 81–97 match the Involved in PIP2 interaction motif; that stretch reads AVIRGKKGSGGITVKKT. Position 111 is a phosphothreonine (T111).

Belongs to the profilin family. As to quaternary structure, occurs in many kinds of cells as a complex with monomeric actin in a 1:1 ratio. Phosphorylated by MAP kinases.

Its subcellular location is the cytoplasm. The protein localises to the cytoskeleton. Functionally, binds to actin and affects the structure of the cytoskeleton. At high concentrations, profilin prevents the polymerization of actin, whereas it enhances it at low concentrations. This Zea mays (Maize) protein is Profilin-7.